The primary structure comprises 329 residues: Porphobilinogen deaminase (329 aa).

At Cys250 the chain carries S-(dipyrrolylmethanemethyl)cysteine.

Belongs to the HMBS family. Monomer. Dipyrromethane serves as cofactor.

The enzyme catalyses 4 porphobilinogen + H2O = hydroxymethylbilane + 4 NH4(+). Its pathway is porphyrin-containing compound metabolism; protoporphyrin-IX biosynthesis; coproporphyrinogen-III from 5-aminolevulinate: step 2/4. Its function is as follows. Tetrapolymerization of the monopyrrole PBG into the hydroxymethylbilane pre-uroporphyrinogen in several discrete steps. The chain is Porphobilinogen deaminase from Burkholderia pseudomallei (strain 668).